A 228-amino-acid polypeptide reads, in one-letter code: Rab-like protein 2A (228 aa).

Residues 28–35, 76–80, and 133–136 contribute to the GTP site; these read GDSAVGKS, DTAGQ, and NKID. The interval 200 to 228 is disordered; that stretch reads LEQEEEDVPDQEQSSSIETPSEEVASPHS.

The protein belongs to the small GTPase superfamily. Rab family. Interacts with IFT27, IFT81, IFT172, ATP6V1E1, HK1, LDHC, MAPRE1 and HSPA2. As to expression, expressed in the testis.

Plays an essential role in male fertility, sperm intra-flagellar transport, and tail assembly. Binds, in a GTP-regulated manner, to a specific set of effector proteins including key proteins involved in cilia development and function and delivers them into the growing sperm tail. In Homo sapiens (Human), this protein is Rab-like protein 2A (RABL2A).